The primary structure comprises 497 residues: uncharacterized protein (497 aa).

The Ca(2+) site is built by aspartate 12, threonine 13, and cysteine 52. Cysteine 52 acts as the Nucleophile in catalysis. Cysteine 52 carries the 3-oxoalanine (Cys) modification. Histidine 102 is an active-site residue. Ca(2+) is bound by residues aspartate 284 and histidine 285.

This sequence belongs to the sulfatase family. Requires Ca(2+) as cofactor. Post-translationally, the conversion to 3-oxoalanine (also known as C-formylglycine, FGly), of a serine or cysteine residue in prokaryotes and of a cysteine residue in eukaryotes, is critical for catalytic activity.

This is an uncharacterized protein from Escherichia coli (strain K12).